The chain runs to 295 residues: Tyrosine recombinase XerC (295 aa).

In terms of domain architecture, Core-binding (CB) spans 1–85 (MLTALNRYWD…ALRRFLSFLV (85 aa)). Positions 106–285 (HLPKNMDGEQ…NFQHLAEVYD (180 aa)) constitute a Tyr recombinase domain. Residues arginine 145, lysine 169, histidine 237, arginine 240, and histidine 263 contribute to the active site. Tyrosine 272 (O-(3'-phospho-DNA)-tyrosine intermediate) is an active-site residue.

Belongs to the 'phage' integrase family. XerC subfamily. In terms of assembly, forms a cyclic heterotetrameric complex composed of two molecules of XerC and two molecules of XerD.

It is found in the cytoplasm. Its function is as follows. Site-specific tyrosine recombinase, which acts by catalyzing the cutting and rejoining of the recombining DNA molecules. The XerC-XerD complex is essential to convert dimers of the bacterial chromosome into monomers to permit their segregation at cell division. It also contributes to the segregational stability of plasmids. The chain is Tyrosine recombinase XerC from Haemophilus influenzae (strain PittEE).